The chain runs to 50 residues: Large ribosomal subunit protein bL33 (50 aa).

This sequence belongs to the bacterial ribosomal protein bL33 family.

This is Large ribosomal subunit protein bL33 from Mycoplasmopsis synoviae (strain 53) (Mycoplasma synoviae).